The sequence spans 359 residues: DNA polymerase IV (359 aa).

The 182-residue stretch at 4 to 185 (IIHIDMDCYF…LSLRKIPGVG (182 aa)) folds into the UmuC domain. Asp-8 and Asp-103 together coordinate Mg(2+). The active site involves Glu-104.

This sequence belongs to the DNA polymerase type-Y family. Monomer. The cofactor is Mg(2+).

It is found in the cytoplasm. It catalyses the reaction DNA(n) + a 2'-deoxyribonucleoside 5'-triphosphate = DNA(n+1) + diphosphate. Functionally, poorly processive, error-prone DNA polymerase involved in untargeted mutagenesis. Copies undamaged DNA at stalled replication forks, which arise in vivo from mismatched or misaligned primer ends. These misaligned primers can be extended by PolIV. Exhibits no 3'-5' exonuclease (proofreading) activity. May be involved in translesional synthesis, in conjunction with the beta clamp from PolIII. The protein is DNA polymerase IV of Shewanella sp. (strain ANA-3).